A 499-amino-acid polypeptide reads, in one-letter code: Tyrosine-protein kinase Blk (499 aa).

The disordered stretch occupies residues 1-34 (MGLLSSKRQVSEKGKGWSPVKIRTQDKAPPPLPP). Glycine 2 is lipidated: N-myristoyl glycine. The SH3 domain occupies 52 to 112 (EEERFVVALF…PSNFVAPVET (61 aa)). The region spanning 118–214 (WFFRTISRKD…GLCQKLTLPC (97 aa)) is the SH2 domain. Residues 235–488 (LKLVRKLGSG…FLQSVLEDFY (254 aa)) form the Protein kinase domain. ATP-binding positions include 241 to 249 (LGSGQFGEV) and lysine 263. Aspartate 354 serves as the catalytic Proton acceptor. A Phosphotyrosine; by autocatalysis modification is found at tyrosine 383.

The protein belongs to the protein kinase superfamily. Tyr protein kinase family. SRC subfamily. Interacts with CBL (via SH2 domain). Interacts with CD79A and CD79B (via SH2 domain). Post-translationally, phosphorylated on tyrosine residues after antibody-mediated surface engagement of the B-cell antigen receptor (BCR). Ubiquitination of activated BLK by the UBE3A ubiquitin protein ligase leads to its degradation by the ubiquitin-proteasome pathway. Expressed in immature Vgamma2 gamma-delta T-cells (at protein level). Expressed in the B-cell lineage.

Its subcellular location is the cell membrane. It catalyses the reaction L-tyrosyl-[protein] + ATP = O-phospho-L-tyrosyl-[protein] + ADP + H(+). Its activity is regulated as follows. Antibody-mediated surface engagement of the B-cell antigen receptor (BCR) which results in the phosphorylation of BLK on tyrosine residues, stimulates the enzymatic activity. Functionally, non-receptor tyrosine kinase involved in B-lymphocyte development, differentiation and signaling. B-cell receptor (BCR) signaling requires a tight regulation of several protein tyrosine kinases and phosphatases, and associated coreceptors. Binding of antigen to the B-cell antigen receptor (BCR) triggers signaling that ultimately leads to B-cell activation. Signaling through BLK plays an important role in transmitting signals through surface immunoglobulins and supports the pro-B to pre-B transition, as well as the signaling for growth arrest and apoptosis downstream of B-cell receptor. Specifically binds and phosphorylates CD79A at 'Tyr-188'and 'Tyr-199', as well as CD79B at 'Tyr-196' and 'Tyr-207'. Also phosphorylates the immunoglobulin G receptor FCGR2. With FYN and LYN, plays an essential role in pre-B-cell receptor (pre-BCR)-mediated NF-kappa-B activation. Also contributes to BTK activation by indirectly stimulating BTK intramolecular autophosphorylation. In pancreatic islets, acts as a modulator of beta-cells function through the up-regulation of PDX1 and NKX6-1 and consequent stimulation of insulin secretion in response to glucose. Phosphorylates CGAS, promoting retention of CGAS in the cytosol. The polypeptide is Tyrosine-protein kinase Blk (Blk) (Mus musculus (Mouse)).